A 1605-amino-acid polypeptide reads, in one-letter code: Pentafunctional AROM polypeptide (1605 aa).

The tract at residues 1-384 (MTGPTKISIL…YEPRASVVPN (384 aa)) is 3-dehydroquinate synthase. Residues 44-46 (DTN), 81-84 (EVSK), 114-116 (GGV), and aspartate 119 each bind NAD(+). A 7-phospho-2-dehydro-3-deoxy-D-arabino-heptonate-binding site is contributed by arginine 130. NAD(+) is bound at residue 139-140 (TT). Aspartate 146 and lysine 152 together coordinate 7-phospho-2-dehydro-3-deoxy-D-arabino-heptonate. NAD(+) is bound at residue lysine 161. Asparagine 162 contributes to the 7-phospho-2-dehydro-3-deoxy-D-arabino-heptonate binding site. Residues 179 to 182 (FLET) and asparagine 190 contribute to the NAD(+) site. Position 194 (glutamate 194) interacts with Zn(2+). 7-phospho-2-dehydro-3-deoxy-D-arabino-heptonate-binding positions include 194–197 (EVIK) and lysine 250. Glutamate 260 (proton acceptor; for 3-dehydroquinate synthase activity) is an active-site residue. Residues 264-268 (RNLLN) and histidine 271 each bind 7-phospho-2-dehydro-3-deoxy-D-arabino-heptonate. Histidine 271 is a binding site for Zn(2+). Histidine 275 (proton acceptor; for 3-dehydroquinate synthase activity) is an active-site residue. 2 residues coordinate 7-phospho-2-dehydro-3-deoxy-D-arabino-heptonate: histidine 287 and lysine 356. Histidine 287 contributes to the Zn(2+) binding site. The segment at 397 to 842 (VHPGVSTTSE…WDTLRQKFAV (446 aa)) is EPSP synthase. Cysteine 824 (for EPSP synthase activity) is an active-site residue. The interval 864 to 1055 (SASVFIIGMR…KKKQHSFFVS (192 aa)) is shikimate kinase. Residue 871–878 (GMRGAGKT) participates in ATP binding. A 3-dehydroquinase region spans residues 1056–1276 (LTLPDVRGAD…AAPGQLSATD (221 aa)). Histidine 1179 (proton acceptor; for 3-dehydroquinate dehydratase activity) is an active-site residue. Lysine 1207 serves as the catalytic Schiff-base intermediate with substrate; for 3-dehydroquinate dehydratase activity. The segment at 1289 to 1605 (KKRFALFGSP…LSGRTMLTCS (317 aa)) is shikimate dehydrogenase.

In the N-terminal section; belongs to the sugar phosphate cyclases superfamily. Dehydroquinate synthase family. The protein in the 2nd section; belongs to the EPSP synthase family. This sequence in the 3rd section; belongs to the shikimate kinase family. It in the 4th section; belongs to the type-I 3-dehydroquinase family. In the C-terminal section; belongs to the shikimate dehydrogenase family. As to quaternary structure, homodimer. Zn(2+) is required as a cofactor.

Its subcellular location is the cytoplasm. The enzyme catalyses 7-phospho-2-dehydro-3-deoxy-D-arabino-heptonate = 3-dehydroquinate + phosphate. The catalysed reaction is 3-dehydroquinate = 3-dehydroshikimate + H2O. It catalyses the reaction shikimate + NADP(+) = 3-dehydroshikimate + NADPH + H(+). It carries out the reaction shikimate + ATP = 3-phosphoshikimate + ADP + H(+). The enzyme catalyses 3-phosphoshikimate + phosphoenolpyruvate = 5-O-(1-carboxyvinyl)-3-phosphoshikimate + phosphate. It participates in metabolic intermediate biosynthesis; chorismate biosynthesis; chorismate from D-erythrose 4-phosphate and phosphoenolpyruvate: step 2/7. It functions in the pathway metabolic intermediate biosynthesis; chorismate biosynthesis; chorismate from D-erythrose 4-phosphate and phosphoenolpyruvate: step 3/7. Its pathway is metabolic intermediate biosynthesis; chorismate biosynthesis; chorismate from D-erythrose 4-phosphate and phosphoenolpyruvate: step 4/7. The protein operates within metabolic intermediate biosynthesis; chorismate biosynthesis; chorismate from D-erythrose 4-phosphate and phosphoenolpyruvate: step 5/7. It participates in metabolic intermediate biosynthesis; chorismate biosynthesis; chorismate from D-erythrose 4-phosphate and phosphoenolpyruvate: step 6/7. In terms of biological role, the AROM polypeptide catalyzes 5 consecutive enzymatic reactions in prechorismate polyaromatic amino acid biosynthesis. The chain is Pentafunctional AROM polypeptide from Aspergillus fumigatus (strain CBS 144.89 / FGSC A1163 / CEA10) (Neosartorya fumigata).